The following is a 279-amino-acid chain: Probable endonuclease 4 (279 aa).

Zn(2+) contacts are provided by His66, His106, Glu142, Asp176, His179, His213, Asp226, His228, and Glu258.

This sequence belongs to the AP endonuclease 2 family. It depends on Zn(2+) as a cofactor.

It carries out the reaction Endonucleolytic cleavage to 5'-phosphooligonucleotide end-products.. Functionally, endonuclease IV plays a role in DNA repair. It cleaves phosphodiester bonds at apurinic or apyrimidinic (AP) sites, generating a 3'-hydroxyl group and a 5'-terminal sugar phosphate. The polypeptide is Probable endonuclease 4 (Photobacterium profundum (strain SS9)).